A 213-amino-acid chain; its full sequence is Ras-related protein Rab-2 (213 aa).

The GTP site is built by Thr-15, Gly-16, Gly-18, Lys-19, Ser-20, Cys-21, Gln-32, Pro-33, His-35, Thr-38, Gly-64, Asn-119, Asp-122, and Ala-150. A Mg(2+)-binding site is contributed by Ser-20. Thr-38 lines the Mg(2+) pocket. A disordered region spans residues Gln-190–Cys-213. S-geranylgeranyl cysteine attachment occurs at residues Cys-212 and Cys-213.

The protein belongs to the small GTPase superfamily. Rab family. As to quaternary structure, interacts (GTP-bound form) with Vps16A and Vps39; the interaction with Vps39 is probably direct.

The protein localises to the vesicle. It localises to the cytoplasmic vesicle. Its subcellular location is the cell projection. It is found in the axon. The protein resides in the presynapse. The protein localises to the presynaptic active zone. It localises to the golgi apparatus. Its subcellular location is the trans-Golgi network. It is found in the perikaryon. The protein resides in the autophagosome membrane. The protein localises to the autolysosome membrane. The catalysed reaction is GTP + H2O = GDP + phosphate + H(+). May be involved in bidirectional endoplasmic reticulum (ER) to Golgi trafficking. Together with Rab7 involved in promoting fusion of autophagosomes and endosomes with lysosomes, probably through recruitment of the HOPS tethering complex. Involved in biosynthetic transport to lysosomes. In larval motor neurons, mediates the biogenesis of presynaptic cargo vesicles and their long-range axonal trafficking to synaptic termini. Not involved in axonal trafficking of mitochondria. During vesicle biogenesis, active zone proteins (including brp/Bruchpilot) and synaptic vesicle proteins (including VGlut) are sorted from the trans-Golgi in a Rab2-dependent manner via, at least, two independent routes. Acts upstream of Arl8 during presynaptic precursor vesicle biogenesis. Associated with lysosomal marker positive presynaptic cargo vesicles during anterograde and retrograde axonal trafficking, probably while in its GTP-bound active state. Involved in the delivery of presynaptic cargos, but not presynapse assembly or active zone function at synaptic termini. Required for autophagocytosis-dependent remodeling of myofibrils and transverse-tubules (T-tubules) during metamorphosis. The chain is Ras-related protein Rab-2 from Drosophila melanogaster (Fruit fly).